A 433-amino-acid chain; its full sequence is Glutamate-1-semialdehyde 2,1-aminomutase (433 aa).

Lysine 271 is subject to N6-(pyridoxal phosphate)lysine.

It belongs to the class-III pyridoxal-phosphate-dependent aminotransferase family. HemL subfamily. In terms of assembly, homodimer. The cofactor is pyridoxal 5'-phosphate.

The protein localises to the cytoplasm. The catalysed reaction is (S)-4-amino-5-oxopentanoate = 5-aminolevulinate. It participates in porphyrin-containing compound metabolism; protoporphyrin-IX biosynthesis; 5-aminolevulinate from L-glutamyl-tRNA(Glu): step 2/2. Its pathway is porphyrin-containing compound metabolism; chlorophyll biosynthesis. This chain is Glutamate-1-semialdehyde 2,1-aminomutase, found in Prochlorococcus marinus (strain MIT 9215).